The following is a 153-amino-acid chain: Large ribosomal subunit protein uL13 (153 aa).

The protein belongs to the universal ribosomal protein uL13 family. In terms of assembly, part of the 50S ribosomal subunit.

Its function is as follows. This protein is one of the early assembly proteins of the 50S ribosomal subunit, although it is not seen to bind rRNA by itself. It is important during the early stages of 50S assembly. The chain is Large ribosomal subunit protein uL13 from Methylobacterium sp. (strain 4-46).